The primary structure comprises 460 residues: 3-isopropylmalate dehydratase large subunit (460 aa).

Cysteine 338, cysteine 398, and cysteine 401 together coordinate [4Fe-4S] cluster.

It belongs to the aconitase/IPM isomerase family. LeuC type 1 subfamily. Heterodimer of LeuC and LeuD. The cofactor is [4Fe-4S] cluster.

It carries out the reaction (2R,3S)-3-isopropylmalate = (2S)-2-isopropylmalate. The protein operates within amino-acid biosynthesis; L-leucine biosynthesis; L-leucine from 3-methyl-2-oxobutanoate: step 2/4. Catalyzes the isomerization between 2-isopropylmalate and 3-isopropylmalate, via the formation of 2-isopropylmaleate. The chain is 3-isopropylmalate dehydratase large subunit from Streptococcus gordonii (strain Challis / ATCC 35105 / BCRC 15272 / CH1 / DL1 / V288).